A 118-amino-acid chain; its full sequence is Large ribosomal subunit protein bL20 (118 aa).

Belongs to the bacterial ribosomal protein bL20 family.

In terms of biological role, binds directly to 23S ribosomal RNA and is necessary for the in vitro assembly process of the 50S ribosomal subunit. It is not involved in the protein synthesizing functions of that subunit. This is Large ribosomal subunit protein bL20 from Sodalis glossinidius (strain morsitans).